The primary structure comprises 495 residues: Mothers against decapentaplegic homolog 6 (495 aa).

Positions 1–15 (MFRSKRSGLVRRLWR) are enriched in basic residues. Disordered stretches follow at residues 1 to 115 (MFRS…PGWL) and 133 to 161 (AAGA…RSRE). A dimethylated arginine; alternate mark is found at R74 and R81. Omega-N-methylarginine; alternate is present on residues R74 and R81. The region spanning 149–276 (PEPEEGGGPR…FSRLCGPESP (128 aa)) is the MH1 domain. A Glycyl lysine isopeptide (Lys-Gly) (interchain with G-Cter in ubiquitin) cross-link involves residue K174. 4 residues coordinate Zn(2+): C206, C248, C261, and H266. The MH2 domain maps to 332–495 (WCSVAYWEHR…WLEILLNNHR (164 aa)). S436 bears the Phosphoserine; by PRKX; in vitro mark.

Belongs to the dwarfin/SMAD family. In terms of assembly, interacts with NEDD4L. Interacts with WWP1. Interacts with STAMBP and PRKX. Interacts with RNF111 and AXIN1. Interacts with TGF-beta type I receptor superfamily members, including ACVR1B, BMPR1B and TGFBR1. In response to BMP2 treatment, interacts with SMAD1; this interaction may inhibit SMAD1-binding to SMAD4. Interacts with HOXC8 and HOXC9. Interacts with PELI1; this interaction interferes with PELI1 complex formation with TRAF6, IRAK1, IRAK4 and MYD88 in response to IL1B and hence negatively regulates IL1R-TLR signaling. Interacts with TSC22D1/TSC-22. Post-translationally, monoubiquitinated at Lys-174 by the E2/E3 hybrid ubiquitin-protein ligase UBE2O, leading to reduced binding affinity for the activated BMP type I receptor ACVR1/ALK2, thereby enhancing BMP7 and regulating adipocyte differentiation. Ubiquitinated by WWP1. Ubiquitinated by ARK2C, promoting proteasomal degradation, leading to enhance the BMP-Smad signaling. In terms of processing, arginine methylation by PRMT1, which is recruited by BMPR2, initiates BMP-Induced signaling and induces dissociation from the BMPR1B receptor at the cell surface leading to derepress downstream Smad1/Smad5 signaling. Phosphorylated by BMP type 1 receptor kinase and by PRKX. Ubiquitous in various organs, with higher levels in lung.

It localises to the nucleus. Its function is as follows. Transforming growth factor-beta superfamily receptors signaling occurs through the Smad family of intracellular mediators. SMAD6 is an inhibitory Smad (i-Smad) that negatively regulates signaling downstream of type I transforming growth factor-beta. Acts as a mediator of TGF-beta and BMP anti-inflammatory activities. Suppresses IL1R-TLR signaling through its direct interaction with PEL1, preventing NF-kappa-B activation, nuclear transport and NF-kappa-B-mediated expression of pro-inflammatory genes. Blocks the BMP-SMAD1 signaling pathway by competing with SMAD4 for receptor-activated SMAD1-binding. Binds to regulatory elements in target promoter regions. The sequence is that of Mothers against decapentaplegic homolog 6 (Smad6) from Mus musculus (Mouse).